The following is a 740-amino-acid chain: Vertnin (740 aa).

Disordered stretches follow at residues 485-506 (EAGEEETGKAGSGAPLTSRGLI), 560-616 (PGMQ…DQNV), and 653-673 (TQSQPHSGSLPSQTLAEAPGG). Over residues 578–604 (QKPEGRQKPEEQQKPEGRQKPEGRQKP) the composition is skewed to basic and acidic residues. The segment covering 653–667 (TQSQPHSGSLPSQTL) has biased composition (polar residues).

This sequence belongs to the vertnin family.

It is found in the nucleus. Acts as a transcription factor that regulates development of thoracic vertebrae. This is Vertnin (Vrtn) from Mus musculus (Mouse).